A 357-amino-acid chain; its full sequence is DNA replication and repair protein RecF (357 aa).

30–37 is a binding site for ATP; sequence GANGSGKT.

Belongs to the RecF family.

The protein resides in the cytoplasm. Its function is as follows. The RecF protein is involved in DNA metabolism; it is required for DNA replication and normal SOS inducibility. RecF binds preferentially to single-stranded, linear DNA. It also seems to bind ATP. The sequence is that of DNA replication and repair protein RecF from Shigella boydii serotype 4 (strain Sb227).